Consider the following 156-residue polypeptide: Putative HTH-type transcriptional regulator YffB (156 aa).

The HTH rrf2-type domain occupies 2 to 137 (KLSSGWEQSV…SNVSLAQVAD (136 aa)).

This Lactococcus lactis subsp. lactis (strain IL1403) (Streptococcus lactis) protein is Putative HTH-type transcriptional regulator YffB (yffB).